The following is a 343-amino-acid chain: Cilia- and flagella-associated protein 36 (343 aa).

Phosphoserine is present on residues Ser85 and Ser147. Residues 147–181 adopt a coiled-coil conformation; that stretch reads SDLEQEEMKILREVLRKSKEEYDQEEERKRKKQSS. The interval 165-191 is disordered; the sequence is KEEYDQEEERKRKKQSSEGKMEEPPIY. At Ser201 the chain carries Phosphoserine. The segment at 286–323 is disordered; it reads SMRKDMRAKQIQNTEQKGKPTREAEEMTEKPEMTAEEK. Residues 301-323 show a composition bias toward basic and acidic residues; it reads QKGKPTREAEEMTEKPEMTAEEK.

Belongs to the CFAP36 family. As to quaternary structure, interacts with ARL3. In terms of tissue distribution, widely expressed (at protein level).

Its subcellular location is the nucleus. It localises to the cytoplasm. The protein localises to the cell projection. It is found in the cilium. The protein resides in the flagellum. May act as an effector for ARL3. The chain is Cilia- and flagella-associated protein 36 from Rattus norvegicus (Rat).